We begin with the raw amino-acid sequence, 476 residues long: NAD(+) hydrolase ThsA (476 aa).

The 280-residue stretch at 4–283 (NPIVELFIKD…QRIENNIKTK (280 aa)) folds into the Deacetylase sirtuin-type domain. NAD(+) is bound by residues Ala23, Asp114, and His152. The active-site Proton acceptor is the His152. An SLOG (STALD) domain, binds 3'cADPR region spans residues 284–476 (TVFLSGSAVE…IIEFVEILSN (193 aa)). Positions 289, 290, 326, 357, 371, 388, 399, and 403 each coordinate 3'cADPR.

It belongs to the soluble Thoeris ThsA family. Homotetramer formed by dimer of dimers; homooctamers are occasionally seen. Not seen to interact with ThsB. In the absence of the signal generated by ThsB, 63% monomer and 20% homotetramer; in the presence of the ThsB signal product 40% of the protein is dimeric. Homotetramer in solution; probably dimerizes via the N-terminal sirtuin-like domain.

The protein localises to the cytoplasm. It catalyses the reaction NAD(+) + H2O = ADP-D-ribose + nicotinamide + H(+). With respect to regulation, activated by a molecule generated by endogenous ThsB (AC J8G8J6) or ThsB' (AC J8CSK2); activation in vitro is 50-100x more sensitive to 3' cyclic ADP-D-ribose (3'cADPR) than 2'cADPR. 3'cADPR activates the NADase function of ThsA by binding to the SLOG domain, which changes its tetramer organization, allowing NAD to access the active site. Also activated by a signal molecule generated by B.dafuensis TIR1 (AC A0A5B8Z670) and TIR2 (AC A0A5B8Z260), and by BdTIR (AC I1GTC2), a plant protein involved in defense against bacterial infection. The signal produced by BdTIR is probably 2'cADPR, which activates this protein, the signal produced by endogenous ThsB' is probably 3'cADPR. NAD(+) hydrolyzing component (NADase) of the Thoeris antiviral defense system, composed of ThsA and ThsB. Activated by a signal molecule generated by endogenous ThsB (AC J8G8J6) or ThsB' (AC J8CSK2, probably 3'cADPR), by TIR1 and TIR2 from B.dafuensis or by BdTIR from B.distachyon (AC I1GTC2, probably 2'cADPR). Upon activation binds and hydrolyzes NAD(+), leading to cell death and inhibition of phage replication. Not seen to bind DNA. Activation is 50-100x more sensitive to 3' cyclic ADP-D-ribose (3'cADPR) than 2'cADPR. In another paper ThsA is not activated by any tested cADPR isomer, although it binds 3'cADPR; it was suggested the protein is already in a fully active state. Expression of ThsA and ThsB in B.subtilis (strain BEST7003) confers resistance to phages phi29, SBSphiC, SBSphiJ and SPO1. At multiplicity of infection (MOI) of 0.05 Thoeris-encoding cultures grow normally when infected with SPO1, at MOI 5 cultures collapse prematurely by 90 minutes post-infection, thus the phage are not able to complete a replication cycle. NAD(+) levels fall and ADP-D-ribose levels rise 60 minutes post-infection. Thoeris cultures eventually recover, but retain the same susceptibility to SPO1. The protein is NAD(+) hydrolase ThsA of Bacillus cereus (strain MSX-D12).